Here is a 175-residue protein sequence, read N- to C-terminus: Anterior gradient protein 2 homolog (175 aa).

Positions 1 to 20 (MEKISVSAFLLLVALSYTLA) are cleaved as a signal peptide. The interval 21-40 (RDTTVKPAAKKDTKDSRPKL) is required to promote cell adhesion. Short sequence motifs (homodimer stabilization; interchain) lie at residues 45–54 (SRGWGDQLIW) and 60–67 (EALYKSKT).

The protein belongs to the AGR family. As to quaternary structure, monomer and homodimer. Interacts with LYPD3 and DAG1 (alphaDAG1). Interacts with MUC2; disulfide-linked.

Its subcellular location is the secreted. The protein resides in the endoplasmic reticulum. Its function is as follows. Required for MUC2 post-transcriptional synthesis and secretion. May play a role in the production of mucus by intestinal cells. Proto-oncogene that may play a role in cell migration, cell differentiation and cell growth. Promotes cell adhesion. The chain is Anterior gradient protein 2 homolog (AGR2) from Pongo abelii (Sumatran orangutan).